The primary structure comprises 471 residues: Argininosuccinate lyase (471 aa).

The protein belongs to the lyase 1 family. Argininosuccinate lyase subfamily.

It is found in the cytoplasm. The catalysed reaction is 2-(N(omega)-L-arginino)succinate = fumarate + L-arginine. It functions in the pathway amino-acid biosynthesis; L-arginine biosynthesis; L-arginine from L-ornithine and carbamoyl phosphate: step 3/3. In Cereibacter sphaeroides (strain ATCC 17025 / ATH 2.4.3) (Rhodobacter sphaeroides), this protein is Argininosuccinate lyase.